The primary structure comprises 41 residues: MKVKNSLRSLKNRHRDCRVVRRKGRVYVINKTQRKFKARQG.

The protein belongs to the bacterial ribosomal protein bL36 family.

This chain is Large ribosomal subunit protein bL36, found in Ruegeria sp. (strain TM1040) (Silicibacter sp.).